The sequence spans 718 residues: Pullulanase (718 aa).

The Nucleophile role is filled by Asp-406. Glu-435 serves as the catalytic Proton donor.

This sequence belongs to the glycosyl hydrolase 13 family.

It catalyses the reaction Hydrolysis of (1-&gt;6)-alpha-D-glucosidic linkages in pullulan, amylopectin and glycogen, and in the alpha- and beta-limit dextrins of amylopectin and glycogen.. This Bacillus subtilis (strain 168) protein is Pullulanase (amyX).